The chain runs to 230 residues: Spliceosome-associated protein CWC15 homolog (230 aa).

Disordered regions lie at residues 1–157 and 164–183; these read MTTA…EEKQ and AGNP…GGDF. Residues 25-34 show a composition bias toward polar residues; the sequence is KLSNQYSSKD. Coiled coils occupy residues 47–82 and 119–164; these read GQET…SASS and DSDE…NILA. A compositionally biased stretch (basic and acidic residues) spans 52–78; the sequence is ADLRKKDLRRELEDKERNAIREKRARD. The span at 104–125 shows a compositional bias: acidic residues; that stretch reads DADEAVDELNSSDDDDSDEDDT. Residues 131-157 are compositionally biased toward basic and acidic residues; it reads ELEKIKKERAEEKAARDEEIKEKEEKQ.

It belongs to the CWC15 family. In terms of assembly, component of spliceosomal complex.

Its subcellular location is the nucleus. Functionally, component of a spliceosomal complex that is required for activating pre-mRNA splicing. In Caenorhabditis elegans, this protein is Spliceosome-associated protein CWC15 homolog.